An 86-amino-acid chain; its full sequence is uncharacterized protein (86 aa).

This is an uncharacterized protein from Saccharomyces cerevisiae (strain ATCC 204508 / S288c) (Baker's yeast).